The primary structure comprises 636 residues: Ketocytochalasin monooxygenase (636 aa).

Residues D125, 133–136 (TWYW), D145, Y151, and I195 contribute to the FAD site. An NADP(+)-binding site is contributed by 143–145 (ACD). NADP(+) is bound by residues 279-285 (TGASAVQ), 302-303 (RT), and 420-421 (KR). W534 contacts FAD.

Belongs to the FAD-binding monooxygenase family. FAD is required as a cofactor.

It carries out the reaction ketocytochalasin + NADPH + O2 + H(+) = iso-precytochalasin + NADP(+) + H2O. The catalysed reaction is iso-precytochalasin + NADPH + O2 + H(+) = cytochalasin Z16 + NADP(+) + H2O. It functions in the pathway mycotoxin biosynthesis. Ketocytochalasin monooxygenase; part of the gene cluster that mediates the biosynthesis of a family of the mycotoxins cytochalasins E and K. The hybrid PKS-NRPS synthetase ccsA and the enoyl reductase ccsC are responsible for fusion of phenylalanine with an octaketide backbone and subsequent release of the stable tetramic acid precursor. The polyketide synthase module (PKS) of the PKS-NRPS ccsA is responsible for the synthesis of the octaketide backbone. The downstream nonribosomal peptide synthetase (NRPS) amidates the carboxyl end of the octaketide with a phenylalanine. A reductase-like domain (R) at the C-terminus catalyzes the reductive release of the polyketide-amino acid intermediate. Because ccsA lacks a designated enoylreductase (ER) domain, the required activity is provided the enoyl reductase ccsC. Upon formation of the 11-membered carbocycle-fused perhydroisoindolone intermediate, a number of oxidative steps are required to afford the final cytochalasin E and K, including two hydroxylations at C17 and C18, one alcohol oxidation at C17, one epoxidation at C6 and C7 and two Baeyer-Villiger oxidations. The oxidative modification at C17, C18 and the C6-C7 epoxidation are likely to be catalyzed by the two cytochrome P450 oxygenases ccsD and ccsG. CcsD may be responsible for the epoxidation of the C6-C7 double bond. CcsG may be responsible for the successive oxidative modifications at C17 and C18. The double Baeyer-Villiger oxidations of ketocytochalasin to precytochalasin and cytochalasin Z(16) are among the final steps leading to cytochalasin E and K and are catalyzed by ccsB. The first oxygen insertion step follows that of the classic BVMO mechanism, generating the ester precytochalasin. Release of precytochalasin into an aqueous environment can generate the shunt product iso-precytochalasin through spontaneous isomerization. Alternatively, precytochalasin can undergo further oxidation by ccsB to yield the in-line carbonate-containing cytochalasin Z(16). Cytochalasin Z(16) is a precursor to cytochalasin E and cytochalasin K, whereas iso-precytochalasin is a precursor to cytochalasin Z(17) and rosellichalasin. The hydrolyase ccsE may catalyze hydrolysis of epoxide bond in cytochalasin E to afford cytochalasin K. The function of ccsF has not been assigned but it may play a role in post-PKS-NRPS biosynthetic step, resistance or transport of cytochalasins and related PKS-NRPS products. In Aspergillus clavatus (strain ATCC 1007 / CBS 513.65 / DSM 816 / NCTC 3887 / NRRL 1 / QM 1276 / 107), this protein is Ketocytochalasin monooxygenase.